Reading from the N-terminus, the 464-residue chain is Glycine receptor subunit alpha-3 (464 aa).

The signal sequence occupies residues 1–33; the sequence is MAHVRHFRTLLSGFYFWEAALLLSLVATKETNS. Residues 34 to 255 lie on the Extracellular side of the membrane; sequence ARSRSAPMSP…RFHLERQMGY (222 aa). A glycan (N-linked (GlcNAc...) asparagine) is linked at Asn71. An intrachain disulfide couples Cys171 to Cys185. The Zn(2+) site is built by Glu225 and Asp227. An intrachain disulfide couples Cys231 to Cys242. Residue 235–240 participates in strychnine binding; the sequence is YNTGKF. His248 is a Zn(2+) binding site. A helical membrane pass occupies residues 256-277; sequence YLIQMYIPSLLIVILSWVSFWI. Residues 278 to 282 lie on the Cytoplasmic side of the membrane; that stretch reads NMDAA. A helical membrane pass occupies residues 283-303; sequence PARVALGITTVLTMTTQSSGS. At 304 to 314 the chain is on the extracellular side; the sequence is RASLPKVSYVK. A helical membrane pass occupies residues 315–335; the sequence is AIDIWMAVCLLFVFSALLEYA. The Cytoplasmic portion of the chain corresponds to 336–430; sequence AVNFVSRQHK…FIDRAKKIDT (95 aa). Residue Ser370 is modified to Phosphoserine. The residue at position 379 (Ser379) is a Phosphoserine; by PKA. The helical transmembrane segment at 431 to 451 threads the bilayer; sequence ISRACFPLAFLIFNIFYWVIY. Over 452–464 the chain is Extracellular; it reads KILRHEDIHHQQD.

This sequence belongs to the ligand-gated ion channel (TC 1.A.9) family. Glycine receptor (TC 1.A.9.3) subfamily. GLRA3 sub-subfamily. Homopentamer (in vitro). Heteropentamer composed of GLRA3 and GLRB. Both homopentamers and heteropentamers form functional ion channels, but their characteristics are subtly different. Phosphorylated by PKA; this causes down-regulation of channel activity.

It is found in the postsynaptic cell membrane. The protein localises to the perikaryon. Its subcellular location is the cell projection. The protein resides in the dendrite. It localises to the synapse. It is found in the cell membrane. It catalyses the reaction chloride(in) = chloride(out). Low levels of Zn(2+) ions (1 uM) increase glycine sensitivity and decrease the glycine concentration required for half-maximal channel activity. Channel activity is strongly enhanced by ethanol. Inhibited by picrotoxin. Inhibited by prostaglandin E2, probably via PKA-mediated phosphorylation at Ser-379. Its function is as follows. Glycine receptors are ligand-gated chloride channels. Channel opening is triggered by extracellular glycine. Channel characteristics depend on the subunit composition; heteropentameric channels display faster channel closure. Plays an important role in the down-regulation of neuronal excitability. Contributes to the generation of inhibitory postsynaptic currents. Contributes to increased pain perception in response to increased prostaglandin E2 levels. Plays a role in cellular responses to ethanol. The sequence is that of Glycine receptor subunit alpha-3 (Glra3) from Rattus norvegicus (Rat).